Reading from the N-terminus, the 390-residue chain is NADH-quinone oxidoreductase subunit D (390 aa).

It belongs to the complex I 49 kDa subunit family. NDH-1 is composed of 14 different subunits. Subunits NuoB, C, D, E, F, and G constitute the peripheral sector of the complex.

It localises to the cell inner membrane. The catalysed reaction is a quinone + NADH + 5 H(+)(in) = a quinol + NAD(+) + 4 H(+)(out). Functionally, NDH-1 shuttles electrons from NADH, via FMN and iron-sulfur (Fe-S) centers, to quinones in the respiratory chain. The immediate electron acceptor for the enzyme in this species is believed to be ubiquinone. Couples the redox reaction to proton translocation (for every two electrons transferred, four hydrogen ions are translocated across the cytoplasmic membrane), and thus conserves the redox energy in a proton gradient. This Geotalea uraniireducens (strain Rf4) (Geobacter uraniireducens) protein is NADH-quinone oxidoreductase subunit D.